The chain runs to 668 residues: Fe(2+) transporter FeoB (668 aa).

A FeoB-type G domain is found at 3 to 165; that stretch reads SYEIALIGNP…KKAISIAVKD (163 aa). Residue 10–17 participates in GTP binding; the sequence is GNPNVGKS. The Mg(2+) site is built by Asn21, Ala22, Thr24, and Gly25. GTP contacts are provided by residues 35–39, 56–59, 116–119, and 145–147; these read GVTVE, DLPG, NKMD, and SAA. Helical transmembrane passes span 344 to 364, 386 to 406, 418 to 438, 450 to 470, 515 to 535, 574 to 594, 613 to 633, and 643 to 663; these read VGAVLVFFPILAFLFFAISFL, LPGKAVISMVMGFGCNVPAIM, ILTILINPLLSCSARLPIYAL, VVILSMYALGVVLALITAFLF, IIVFGVILVWVLSVYGPSGYL, ALVFGIIAKEVVVGSLAMLYG, AYAFMAFSLIYLPCIATLAVI, and LFAVTYEMILAYVVALVISVI.

Belongs to the TRAFAC class TrmE-Era-EngA-EngB-Septin-like GTPase superfamily. FeoB GTPase (TC 9.A.8) family. The crystallized N-terminal domain is a homodimer.

The protein resides in the cell membrane. In terms of biological role, probable transporter of a GTP-driven Fe(2+) uptake system, might be able to transport Fe(2+) into or out of the cell. The polypeptide is Fe(2+) transporter FeoB (Methanocaldococcus jannaschii (strain ATCC 43067 / DSM 2661 / JAL-1 / JCM 10045 / NBRC 100440) (Methanococcus jannaschii)).